The sequence spans 218 residues: Large ribosomal subunit protein bL25 (218 aa).

Residues 197–218 are disordered; the sequence is PAEESGEKPVAHIEEKESTEKE. Basic and acidic residues predominate over residues 201-218; the sequence is SGEKPVAHIEEKESTEKE.

It belongs to the bacterial ribosomal protein bL25 family. CTC subfamily. Part of the 50S ribosomal subunit; part of the 5S rRNA/L5/L18/L25 subcomplex. Contacts the 5S rRNA. Binds to the 5S rRNA independently of L5 and L18.

Its function is as follows. This is one of the proteins that binds to the 5S RNA in the ribosome where it forms part of the central protuberance. This chain is Large ribosomal subunit protein bL25, found in Dehalococcoides mccartyi (strain ATCC BAA-2100 / JCM 16839 / KCTC 5957 / BAV1).